The sequence spans 434 residues: MAHVVILGAGTGGMPAAYEMKEALGSGHEVTLISANDYFQFVPSNPWVGVGWKERDDIAFPIRHYVERKGIHFIAQSAEQIDAEAQNITLADGNTVHYDYLMIATGPKLAFENVPGSDPHEGPVQSICTVDHAERAFAEYQALLREPGPIVIGAMAGASCFGPAYEYAMIVASDLKKRGMRDKIPSFTFITSEPYIGHLGIQGVGDSKGILTKGLKEEGIEAYTNCKVTKVEDNKMYVTQVDEKGETIKEMVLPVKFGMMIPAFKGVPAVAGVEGLCNPGGFVLVDEHQRSKKYANIFAAGIAIAIPPVETTPVPTGAPKTGYMIESMVSAAVHNIKADLEGRKGEQTMGTWNAVCFADMGDRGAAFIALPQLKPRKVDVFAYGRWVHLAKVAFEKYFIRKMKMGVSEPFYEKVLFKMMGITRLKEEDTHRKAS.

Residues 8-12 (GAGTG), 34-35 (SA), and 77-78 (SA) each bind FAD. Cysteine 160 acts as the Cysteine persulfide intermediate in catalysis. FAD-binding residues include isoleucine 302 and glycine 322. Cysteine 356 acts as the Cysteine persulfide intermediate in catalysis. Residue lysine 391 participates in FAD binding.

It belongs to the SQRD family. As to quaternary structure, homodimer. FAD is required as a cofactor.

It is found in the membrane. It carries out the reaction n a quinone + n hydrogen sulfide + n H(+) = polysulfur(n-2) + n a quinol. In terms of biological role, catalyzes the oxidation of hydrogen sulfide, with the help of a quinone. Consecutive reaction cycles lead to the accumulation of a polysulfide product on the active site Cys residues; these products are released when they exceed a critical length, typically as cyclooctasulfur. The chain is Sulfide-quinone reductase from Acidithiobacillus ferrooxidans (strain ATCC 23270 / DSM 14882 / CIP 104768 / NCIMB 8455) (Ferrobacillus ferrooxidans (strain ATCC 23270)).